Consider the following 212-residue polypeptide: Deoxyribose-phosphate aldolase (212 aa).

Aspartate 89 (proton donor/acceptor) is an active-site residue. The Schiff-base intermediate with acetaldehyde role is filled by lysine 151. The active-site Proton donor/acceptor is the lysine 180.

Belongs to the DeoC/FbaB aldolase family. DeoC type 1 subfamily.

It is found in the cytoplasm. It catalyses the reaction 2-deoxy-D-ribose 5-phosphate = D-glyceraldehyde 3-phosphate + acetaldehyde. It functions in the pathway carbohydrate degradation; 2-deoxy-D-ribose 1-phosphate degradation; D-glyceraldehyde 3-phosphate and acetaldehyde from 2-deoxy-alpha-D-ribose 1-phosphate: step 2/2. In terms of biological role, catalyzes a reversible aldol reaction between acetaldehyde and D-glyceraldehyde 3-phosphate to generate 2-deoxy-D-ribose 5-phosphate. This is Deoxyribose-phosphate aldolase from Clostridium botulinum (strain Okra / Type B1).